The following is a 1298-amino-acid chain: Phosphoribosylformylglycinamidine synthase (1298 aa).

The tract at residues 303–327 (FPGAATGSGGEIRDEGATGRGAKPK) is disordered. ATP contacts are provided by residues 305-316 (GAATGSGGEIRD), 384-386 (TGY), and alanine 676. 4 residues coordinate Mg(2+): aspartate 677, glutamate 716, asparagine 720, and aspartate 884. Serine 886 contacts ATP. A Glutamine amidotransferase type-1 domain is found at 1045 to 1298 (VAVLREQGVN…MFRNARAWVN (254 aa)). Cysteine 1138 functions as the Nucleophile in the catalytic mechanism. Catalysis depends on residues histidine 1263 and glutamate 1265.

It in the N-terminal section; belongs to the FGAMS family. Monomer.

The protein resides in the cytoplasm. The catalysed reaction is N(2)-formyl-N(1)-(5-phospho-beta-D-ribosyl)glycinamide + L-glutamine + ATP + H2O = 2-formamido-N(1)-(5-O-phospho-beta-D-ribosyl)acetamidine + L-glutamate + ADP + phosphate + H(+). It participates in purine metabolism; IMP biosynthesis via de novo pathway; 5-amino-1-(5-phospho-D-ribosyl)imidazole from N(2)-formyl-N(1)-(5-phospho-D-ribosyl)glycinamide: step 1/2. Functionally, phosphoribosylformylglycinamidine synthase involved in the purines biosynthetic pathway. Catalyzes the ATP-dependent conversion of formylglycinamide ribonucleotide (FGAR) and glutamine to yield formylglycinamidine ribonucleotide (FGAM) and glutamate. The polypeptide is Phosphoribosylformylglycinamidine synthase (Pseudomonas syringae pv. syringae (strain B728a)).